A 241-amino-acid polypeptide reads, in one-letter code: Small ribosomal subunit protein uS3 (241 aa).

In terms of domain architecture, KH type-2 spans 39–109 (IRQHVEKNLS…QIRINVIEVS (71 aa)). Residues 215–241 (EQAMAAPAPTPRKKRRPQQFEDRSNEE) form a disordered region. A compositionally biased stretch (basic and acidic residues) spans 232–241 (QQFEDRSNEE).

Belongs to the universal ribosomal protein uS3 family. Part of the 30S ribosomal subunit. Forms a tight complex with proteins S10 and S14.

Its function is as follows. Binds the lower part of the 30S subunit head. Binds mRNA in the 70S ribosome, positioning it for translation. The protein is Small ribosomal subunit protein uS3 of Crocosphaera subtropica (strain ATCC 51142 / BH68) (Cyanothece sp. (strain ATCC 51142)).